Here is a 197-residue protein sequence, read N- to C-terminus: ATP-dependent Clp protease proteolytic subunit (197 aa).

Ser-98 (nucleophile) is an active-site residue. Residue His-123 is part of the active site.

Belongs to the peptidase S14 family. As to quaternary structure, fourteen ClpP subunits assemble into 2 heptameric rings which stack back to back to give a disk-like structure with a central cavity, resembling the structure of eukaryotic proteasomes.

It is found in the cytoplasm. It catalyses the reaction Hydrolysis of proteins to small peptides in the presence of ATP and magnesium. alpha-casein is the usual test substrate. In the absence of ATP, only oligopeptides shorter than five residues are hydrolyzed (such as succinyl-Leu-Tyr-|-NHMec, and Leu-Tyr-Leu-|-Tyr-Trp, in which cleavage of the -Tyr-|-Leu- and -Tyr-|-Trp bonds also occurs).. In terms of biological role, cleaves peptides in various proteins in a process that requires ATP hydrolysis. Has a chymotrypsin-like activity. Plays a major role in the degradation of misfolded proteins. This is ATP-dependent Clp protease proteolytic subunit from Haemophilus ducreyi (strain 35000HP / ATCC 700724).